The primary structure comprises 246 residues: Electron transfer flavoprotein beta subunit lysine methyltransferase (246 aa).

It belongs to the methyltransferase superfamily. ETFBKMT family.

The protein localises to the cytoplasm. It localises to the mitochondrion matrix. The enzyme catalyses L-lysyl-[protein] + 3 S-adenosyl-L-methionine = N(6),N(6),N(6)-trimethyl-L-lysyl-[protein] + 3 S-adenosyl-L-homocysteine + 3 H(+). Protein-lysine methyltransferase that selectively trimethylates the flavoprotein ETFB in mitochondria. Thereby, may negatively regulate the function of ETFB in electron transfer from Acyl-CoA dehydrogenases to the main respiratory chain. The polypeptide is Electron transfer flavoprotein beta subunit lysine methyltransferase (etfbkmt) (Xenopus laevis (African clawed frog)).